A 188-amino-acid chain; its full sequence is Ribosomal RNA small subunit methyltransferase G (188 aa).

S-adenosyl-L-methionine-binding positions include Gly-69, Phe-74, 119 to 120 (VQ), and Arg-134.

Belongs to the methyltransferase superfamily. RNA methyltransferase RsmG family.

Its subcellular location is the cytoplasm. It catalyses the reaction guanosine(527) in 16S rRNA + S-adenosyl-L-methionine = N(7)-methylguanosine(527) in 16S rRNA + S-adenosyl-L-homocysteine. Functionally, specifically methylates the N7 position of guanine in position 527 of 16S rRNA. This is Ribosomal RNA small subunit methyltransferase G from Campylobacter jejuni subsp. doylei (strain ATCC BAA-1458 / RM4099 / 269.97).